The sequence spans 370 residues: 3-dehydroquinate synthase (370 aa).

Residues 112-116 (GVVGD), 136-137 (TS), lysine 149, lysine 158, and 176-179 (TLRT) contribute to the NAD(+) site. 3 residues coordinate Zn(2+): glutamate 191, histidine 254, and histidine 276.

Belongs to the sugar phosphate cyclases superfamily. Dehydroquinate synthase family. Co(2+) is required as a cofactor. It depends on Zn(2+) as a cofactor. NAD(+) serves as cofactor.

Its subcellular location is the cytoplasm. The catalysed reaction is 7-phospho-2-dehydro-3-deoxy-D-arabino-heptonate = 3-dehydroquinate + phosphate. It functions in the pathway metabolic intermediate biosynthesis; chorismate biosynthesis; chorismate from D-erythrose 4-phosphate and phosphoenolpyruvate: step 2/7. Catalyzes the conversion of 3-deoxy-D-arabino-heptulosonate 7-phosphate (DAHP) to dehydroquinate (DHQ). This is 3-dehydroquinate synthase from Xanthomonas oryzae pv. oryzae (strain MAFF 311018).